The chain runs to 107 residues: Dispanin subfamily A member 2b (107 aa).

The Extracellular portion of the chain corresponds to 1–31; the sequence is MEYRTDQVPMSPRSVQGAPGTLPIRDHLPWS. Residues 32–52 traverse the membrane as a helical segment; that stretch reads IFNLFYMNVCCLGLTAMIFSV. Residues Cys41 and Cys42 are each lipidated (S-palmitoyl cysteine). The Cytoplasmic segment spans residues 53 to 77; sequence KSRDRKVVGDVEGARHYGSTARSLN. The chain crosses the membrane as a helical span at residues 78–98; the sequence is IAATVLGILLIIILIGLAATG. The Extracellular segment spans residues 99–107; that stretch reads TIQALKYKG.

It belongs to the CD225/Dispanin family. In terms of tissue distribution, expressed various cell types in torpedo electric organ and muscle, especially fibroblasts, capillary endothelial cells, and axonal cuff cells.

It is found in the cell membrane. The chain is Dispanin subfamily A member 2b from Torpedo marmorata (Marbled electric ray).